We begin with the raw amino-acid sequence, 143 residues long: Nucleoside diphosphate kinase (143 aa).

K11, F59, R87, T93, R104, and N114 together coordinate ATP. The active-site Pros-phosphohistidine intermediate is the H117.

It belongs to the NDK family. Homotetramer. Requires Mg(2+) as cofactor.

The protein localises to the cytoplasm. The catalysed reaction is a 2'-deoxyribonucleoside 5'-diphosphate + ATP = a 2'-deoxyribonucleoside 5'-triphosphate + ADP. It catalyses the reaction a ribonucleoside 5'-diphosphate + ATP = a ribonucleoside 5'-triphosphate + ADP. Functionally, major role in the synthesis of nucleoside triphosphates other than ATP. The ATP gamma phosphate is transferred to the NDP beta phosphate via a ping-pong mechanism, using a phosphorylated active-site intermediate. The polypeptide is Nucleoside diphosphate kinase (Pseudomonas aeruginosa (strain UCBPP-PA14)).